A 40-amino-acid chain; its full sequence is Large ribosomal subunit protein bL36 (40 aa).

This sequence belongs to the bacterial ribosomal protein bL36 family.

The chain is Large ribosomal subunit protein bL36 from Corynebacterium kroppenstedtii (strain DSM 44385 / JCM 11950 / CIP 105744 / CCUG 35717).